The primary structure comprises 705 residues: Effector protein hopD1 (705 aa).

2 stretches are compositionally biased toward polar residues: residues M1–I11 and Q28–Q41. Disordered stretches follow at residues M1 to Q41 and S173 to S207. Residues S173–P184 show a composition bias toward low complexity.

The protein resides in the secreted. Effector protein involved in non-host recognition. This Pseudomonas syringae pv. tomato (strain ATCC BAA-871 / DC3000) protein is Effector protein hopD1 (hopD1).